A 217-amino-acid chain; its full sequence is Phosphatidylserine decarboxylase proenzyme (217 aa).

The active-site Schiff-base intermediate with substrate; via pyruvic acid is serine 182. The residue at position 182 (serine 182) is a Pyruvic acid (Ser); by autocatalysis.

Belongs to the phosphatidylserine decarboxylase family. PSD-A subfamily. In terms of assembly, heterodimer of a large membrane-associated beta subunit and a small pyruvoyl-containing alpha subunit. Pyruvate is required as a cofactor. Post-translationally, is synthesized initially as an inactive proenzyme. Formation of the active enzyme involves a self-maturation process in which the active site pyruvoyl group is generated from an internal serine residue via an autocatalytic post-translational modification. Two non-identical subunits are generated from the proenzyme in this reaction, and the pyruvate is formed at the N-terminus of the alpha chain, which is derived from the carboxyl end of the proenzyme. The post-translation cleavage follows an unusual pathway, termed non-hydrolytic serinolysis, in which the side chain hydroxyl group of the serine supplies its oxygen atom to form the C-terminus of the beta chain, while the remainder of the serine residue undergoes an oxidative deamination to produce ammonia and the pyruvoyl prosthetic group on the alpha chain.

Its subcellular location is the cell membrane. It catalyses the reaction a 1,2-diacyl-sn-glycero-3-phospho-L-serine + H(+) = a 1,2-diacyl-sn-glycero-3-phosphoethanolamine + CO2. It participates in phospholipid metabolism; phosphatidylethanolamine biosynthesis; phosphatidylethanolamine from CDP-diacylglycerol: step 2/2. In terms of biological role, catalyzes the formation of phosphatidylethanolamine (PtdEtn) from phosphatidylserine (PtdSer). This Nitratidesulfovibrio vulgaris (strain ATCC 29579 / DSM 644 / CCUG 34227 / NCIMB 8303 / VKM B-1760 / Hildenborough) (Desulfovibrio vulgaris) protein is Phosphatidylserine decarboxylase proenzyme.